The primary structure comprises 117 residues: Large ribosomal subunit protein bL20 (117 aa).

Belongs to the bacterial ribosomal protein bL20 family.

In terms of biological role, binds directly to 23S ribosomal RNA and is necessary for the in vitro assembly process of the 50S ribosomal subunit. It is not involved in the protein synthesizing functions of that subunit. This Rickettsia typhi (strain ATCC VR-144 / Wilmington) protein is Large ribosomal subunit protein bL20.